The primary structure comprises 331 residues: Barley B recombinant-like protein D (331 aa).

A coiled-coil region spans residues 43–101 (ALMNDRDNAIRERDHALAEKKAAIAERDMAFTQRDAAMAERNAAVVERDNALAALELAR). The alanine-zipper stretch occupies residues 51–86 (AIRERDHALAEKKAAIAERDMAFTQRDAAMAERNAA). The segment covering 104 to 122 (GLNMNNGNGFPQGSLSGSK) has biased composition (polar residues). Disordered regions lie at residues 104–140 (GLNMNNGNGFPQGSLSGSKNIHHHDQLSHAQSSPLQL) and 156–205 (AYPI…VGMS).

The protein belongs to the BBR/BPC family. In terms of assembly, homodimer. Heterodimer.

The protein resides in the nucleus. In terms of biological role, transcriptional regulator that specifically binds to GA-rich elements (GAGA-repeats) present in regulatory sequences of genes involved in developmental processes. The protein is Barley B recombinant-like protein D of Oryza sativa subsp. japonica (Rice).